A 399-amino-acid chain; its full sequence is Ribonuclease T2-like 1-A (399 aa).

Residues 1–17 (MLSILSIAALLIATVQA) form the signal peptide. Cystine bridges form between Cys24-Cys43, Cys32-Cys79, Cys42-Cys150, Cys87-Cys142, and Cys214-Cys249. Active-site residues include His72, Glu135, and His139. Residues 259-279 (KGNSGANTLTTKTTGTTTSGS) form a disordered region. Over residues 262–279 (SGANTLTTKTTGTTTSGS) the composition is skewed to low complexity. A glycan (N-linked (GlcNAc...) asparagine) is linked at Asn291.

Belongs to the RNase T2 family.

The protein resides in the vacuole lumen. The protein localises to the cytoplasm. The enzyme catalyses a ribonucleotidyl-ribonucleotide-RNA + H2O = a 3'-end 3'-phospho-ribonucleotide-RNA + a 5'-end dephospho-ribonucleoside-RNA + H(+). Rnase which modulates cell survival under stress conditions. Released from the vacuole to the cytoplasm during stress to promote tRNA and rRNA cleavage and to activate separately a downstream pathway that promotes cell death. Involved in cell size, vacuolar morphology and growth at high temperatures and high salt concentration. The chain is Ribonuclease T2-like 1-A (RNY1-A) from Candida albicans (strain SC5314 / ATCC MYA-2876) (Yeast).